The chain runs to 319 residues: Ornithine carbamoyltransferase (319 aa).

Residues 55–58 (STRT), Q82, R106, and 133–136 (HPCQ) contribute to the carbamoyl phosphate site. Residues N171, D234, and 238 to 239 (SM) each bind L-ornithine. Carbamoyl phosphate-binding positions include 274–275 (CL) and R302.

Belongs to the aspartate/ornithine carbamoyltransferase superfamily. OTCase family.

The protein resides in the cytoplasm. It catalyses the reaction carbamoyl phosphate + L-ornithine = L-citrulline + phosphate + H(+). It functions in the pathway amino-acid biosynthesis; L-arginine biosynthesis; L-arginine from L-ornithine and carbamoyl phosphate: step 1/3. In terms of biological role, reversibly catalyzes the transfer of the carbamoyl group from carbamoyl phosphate (CP) to the N(epsilon) atom of ornithine (ORN) to produce L-citrulline. In Corynebacterium glutamicum (strain ATCC 13032 / DSM 20300 / JCM 1318 / BCRC 11384 / CCUG 27702 / LMG 3730 / NBRC 12168 / NCIMB 10025 / NRRL B-2784 / 534), this protein is Ornithine carbamoyltransferase (argF).